The following is a 258-amino-acid chain: Thiazole synthase (258 aa).

K98 acts as the Schiff-base intermediate with DXP in catalysis. Residues G159, 185 to 186 (AG), and 207 to 208 (NT) each bind 1-deoxy-D-xylulose 5-phosphate.

This sequence belongs to the ThiG family. As to quaternary structure, homotetramer. Forms heterodimers with either ThiH or ThiS.

It is found in the cytoplasm. The enzyme catalyses [ThiS sulfur-carrier protein]-C-terminal-Gly-aminoethanethioate + 2-iminoacetate + 1-deoxy-D-xylulose 5-phosphate = [ThiS sulfur-carrier protein]-C-terminal Gly-Gly + 2-[(2R,5Z)-2-carboxy-4-methylthiazol-5(2H)-ylidene]ethyl phosphate + 2 H2O + H(+). It functions in the pathway cofactor biosynthesis; thiamine diphosphate biosynthesis. In terms of biological role, catalyzes the rearrangement of 1-deoxy-D-xylulose 5-phosphate (DXP) to produce the thiazole phosphate moiety of thiamine. Sulfur is provided by the thiocarboxylate moiety of the carrier protein ThiS. In vitro, sulfur can be provided by H(2)S. The polypeptide is Thiazole synthase (Cytophaga hutchinsonii (strain ATCC 33406 / DSM 1761 / CIP 103989 / NBRC 15051 / NCIMB 9469 / D465)).